The sequence spans 1335 residues: Mediator of RNA polymerase II transcription subunit 15a (1335 aa).

8 disordered regions span residues 1-27, 109-172, 190-225, 241-389, 401-448, 496-525, 567-591, and 683-815; these read MDNN…TQLP, GTSI…NNNT, QDSS…QQQP, FQSG…QHQQ, IQQQ…TQSN, LYSS…QQLG, SQRT…ANGG, and HRPR…QSNV. 3 stretches are compositionally biased toward polar residues: residues 110–158, 190–207, and 241–257; these read TSID…TALP, QDSS…SGPQ, and FQSG…PSHI. Over residues 258-270 the composition is skewed to low complexity; it reads QQQQQNVLQPNQL. Positions 271-299 are enriched in polar residues; the sequence is HSSQQPGVPTSATQPSTVNSAPLQGLHTN. Over residues 300–314 the composition is skewed to low complexity; the sequence is QQSSPQLSSQQTTQS. Residues 315–328 are compositionally biased toward polar residues; the sequence is MLRQHQSSMLRQHP. Residues 329-362 are compositionally biased toward low complexity; that stretch reads QSQQASGIHQQQSSLPQQSISPLQQQPTQLMRQQ. Residues 363-374 show a composition bias toward polar residues; the sequence is AANSSGIQQKQM. The segment covering 401-436 has biased composition (low complexity); that stretch reads IQQQQSQQQPLQQPQQQQKQQPPAQQQLMSQQNSLQ. A compositionally biased stretch (polar residues) spans 437–448; sequence ATHQNPLGTQSN. Residues 498–525 are compositionally biased toward low complexity; the sequence is SSQGQQSQNQPSQQQMMPQLQSHHQQLG. Polar residues predominate over residues 567 to 588; sequence SQRTLPEMPSSSLDSTAQTESA. Residues 688–712 are compositionally biased toward low complexity; that stretch reads PVQQGQLPQSQMQPMQQPQSQTVQD. Polar residues-rich tracts occupy residues 716 to 728, 735 to 749, and 756 to 815; these read DNQT…SMSM, AQQS…NVLS, and APQQ…QSNV. Positions 834-882 form a coiled coil; sequence QDQQMQLKQQFQQRQMQQQQLQARQQQQQQQLQARQQAAQLQQMNDMND. Disordered regions lie at residues 947–986 and 1146–1165; these read KMGT…SSSL and FAGS…GKKA. The segment covering 957–973 has biased composition (low complexity); it reads SPFVVPSPSSTPLAPSP. The span at 1148–1160 shows a compositional bias: polar residues; sequence GSETSDLESTATS.

The protein belongs to the plant Mediator complex subunit 15 family. Component of the Mediator complex.

Its subcellular location is the nucleus. In terms of biological role, component of the Mediator complex, a coactivator involved in the regulated transcription of nearly all RNA polymerase II-dependent genes. Mediator functions as a bridge to convey information from gene-specific regulatory proteins to the basal RNA polymerase II transcription machinery. The Mediator complex, having a compact conformation in its free form, is recruited to promoters by direct interactions with regulatory proteins and serves for the assembly of a functional preinitiation complex with RNA polymerase II and the general transcription factors. This is Mediator of RNA polymerase II transcription subunit 15a (MED15A) from Arabidopsis thaliana (Mouse-ear cress).